The sequence spans 194 residues: Histone H1.0 (194 aa).

M1 is subject to N-acetylmethionine. The segment covering 1–11 (MTENSTSTPAA) has biased composition (low complexity). Residues 1–29 (MTENSTSTPAAKPKRAKASKKSTDHPKYS) form a disordered region. N-acetylthreonine; in Histone H1.0, N-terminally processed is present on T2. The H15 domain occupies 24-97 (DHPKYSDMIV…GASGSFRLAK (74 aa)). At R42 the chain carries Citrulline. The tract at residues 83-194 (QTKGVGASGS…SSAKRTGKKK (112 aa)) is disordered. S104 carries the post-translational modification ADP-ribosylserine. The segment covering 105 to 194 (VAFKKTKKEV…SSAKRTGKKK (90 aa)) has biased composition (basic residues).

It belongs to the histone H1/H5 family. ADP-ribosylated on Ser-104 in response to DNA damage.

It localises to the nucleus. It is found in the chromosome. Functionally, histones H1 are necessary for the condensation of nucleosome chains into higher-order structures. The histones H1.0 are found in cells that are in terminal stages of differentiation or that have low rates of cell division. The polypeptide is Histone H1.0 (H1-0) (Bos taurus (Bovine)).